Consider the following 417-residue polypeptide: NADH-quinone oxidoreductase subunit D (417 aa).

The protein belongs to the complex I 49 kDa subunit family. In terms of assembly, NDH-1 is composed of 14 different subunits. Subunits NuoB, C, D, E, F, and G constitute the peripheral sector of the complex.

The protein localises to the cell inner membrane. It carries out the reaction a quinone + NADH + 5 H(+)(in) = a quinol + NAD(+) + 4 H(+)(out). NDH-1 shuttles electrons from NADH, via FMN and iron-sulfur (Fe-S) centers, to quinones in the respiratory chain. The immediate electron acceptor for the enzyme in this species is believed to be ubiquinone. Couples the redox reaction to proton translocation (for every two electrons transferred, four hydrogen ions are translocated across the cytoplasmic membrane), and thus conserves the redox energy in a proton gradient. The chain is NADH-quinone oxidoreductase subunit D from Francisella tularensis subsp. tularensis (strain FSC 198).